The primary structure comprises 299 residues: Protease HtpX homolog (299 aa).

Helical transmembrane passes span 15-35 (ILLL…GYLF) and 39-59 (GLGG…SMIF). Position 143 (H143) interacts with Zn(2+). E144 is an active-site residue. Zn(2+) is bound at residue H147. Helical transmembrane passes span 158–178 (IAVA…RMMW) and 198–218 (IIML…ATLV). E227 lines the Zn(2+) pocket.

It belongs to the peptidase M48B family. Zn(2+) serves as cofactor.

The protein resides in the cell membrane. The chain is Protease HtpX homolog from Streptococcus pneumoniae (strain Taiwan19F-14).